The chain runs to 535 residues: Dual specificity mitogen-activated protein kinase kinase 7 (535 aa).

Residue Ala-2 is modified to N-acetylalanine. Residues 2–30 (AASSLEQKLSRLEAKLKQENREARRRIDL) adopt a coiled-coil conformation. The segment at 37–73 (QRPRPIIVITLSPAPAPSQRAALQLPLANDGGSRSPS) is d domain. The tract at residues 63–93 (LANDGGSRSPSSESSPQHPTPPTRPRHMLGL) is disordered. Over residues 69–79 (SRSPSSESSPQ) the composition is skewed to low complexity. The Protein kinase domain occupies 136 to 396 (LENLGEMGSG…YNKLLEHSFI (261 aa)). ATP-binding positions include 142–150 (MGSGTCGQV) and Lys-165. Asp-259 acts as the Proton acceptor in catalysis. Ser-287 carries the phosphoserine; by MAP3K modification. Thr-291 is modified (phosphothreonine; by MAP3K). The segment at 393 to 416 (HSFIKHYEILEVDVASWFKDVMAK) is DVD domain. Phosphoserine is present on Ser-427.

It belongs to the protein kinase superfamily. STE Ser/Thr protein kinase family. MAP kinase kinase subfamily. As to quaternary structure, interacts with RASSF7, the interaction promotes phosphorylation. Interacts with VRK2. Interacts (via its D domain) with its substrates MAPK8/JNK1, MAPK9/JNK2 and MAPK10/JNK3. Interacts (via its DVD domain) with MAP3Ks activators like MAP3K5/ASK1 and MAP3K1/MEKK1. Interacts with SH3RF1, MAPK8IP1/JIP1, MAPK8IP2/JIP2 and MAPK8IP3/JIP3 scaffold proteins. Found in a complex with SH3RF1, RAC1, MAP3K11/MLK3, MAPK8IP1/JIP1 and MAPK8/JNK1. Found in a complex with SH3RF1, RAC2, MAP3K7/TAK1, MAPK8IP1/JIP1, MAPK8/JNK1 and MAPK9/JNK2. Requires Mg(2+) as cofactor. Post-translationally, activated by phosphorylation on Ser-287 and Thr-291 by MAP kinase kinase kinases (MAP3Ks). Expressed at high levels in brain, lung, liver, skeletal muscle, kidney, and testis and at lower levels in the heart and spleen.

It is found in the nucleus. The protein resides in the cytoplasm. It carries out the reaction L-seryl-[protein] + ATP = O-phospho-L-seryl-[protein] + ADP + H(+). The enzyme catalyses L-threonyl-[protein] + ATP = O-phospho-L-threonyl-[protein] + ADP + H(+). It catalyses the reaction L-tyrosyl-[protein] + ATP = O-phospho-L-tyrosyl-[protein] + ADP + H(+). Activated by phosphorylation by specific MAP kinase kinase kinases such as MAP3K1/MEKK1, MAP3K3/MEKK3, MAP3K11/MLK3 and MAP3K12/DLK. Isoforms 3 and 4 have lower basal activity but a higher level of inducible activation, than isoforms 2, 6, 7 and 8. Its function is as follows. Dual specificity protein kinase which acts as an essential component of the MAP kinase signal transduction pathway. Essential component of the stress-activated protein kinase/c-Jun N-terminal kinase (SAP/JNK) signaling pathway. With MAP2K4/MKK4, is the one of the only known kinase to directly activate the stress-activated protein kinase/c-Jun N-terminal kinases MAPK8/JNK1, MAPK9/JNK2 and MAPK10/JNK3. MAP2K4/MKK4 and MAP2K7/MKK7 both activate the JNKs by phosphorylation, but they differ in their preference for the phosphorylation site in the Thr-Pro-Tyr motif. MAP2K4/MKK4 shows preference for phosphorylation of the Tyr residue and MAP2K7/MKK7 for the Thr residue. The monophosphorylation of JNKs on the Thr residue is sufficient to increase JNK activity indicating that MAP2K7/MKK7 is important to trigger JNK activity, while the additional phosphorylation of the Tyr residue by MAP2K4/MKK4 ensures optimal JNK activation. Has a specific role in JNK signal transduction pathway activated by pro-inflammatory cytokines. The MKK/JNK signaling pathway is also involved in mitochondrial death signaling pathway, including the release cytochrome c, leading to apoptosis. Part of a non-canonical MAPK signaling pathway, composed of the upstream MAP3K12 kinase and downstream MAP kinases MAPK1/ERK2 and MAPK3/ERK1, that enhances the AP-1-mediated transcription of APP in response to APOE. This is Dual specificity mitogen-activated protein kinase kinase 7 from Mus musculus (Mouse).